Reading from the N-terminus, the 263-residue chain is uncharacterized protein (263 aa).

Glycine 31 to threonine 38 is an ATP binding site.

The protein belongs to the CbbQ/NirQ/NorQ/GpvN family.

This is an uncharacterized protein from Staphylococcus saprophyticus subsp. saprophyticus (strain ATCC 15305 / DSM 20229 / NCIMB 8711 / NCTC 7292 / S-41).